We begin with the raw amino-acid sequence, 404 residues long: Peroxisomal biogenesis factor 9 (404 aa).

3 helical membrane passes run Phe73–Phe93, Leu94–Gly114, and Phe149–Val169. The tract at residues Asp180 to Ser214 is disordered. Over residues Gly181–Ser198 the composition is skewed to polar residues. The chain crosses the membrane as a helical span at residues Phe349–Leu369.

Its subcellular location is the peroxisome membrane. In terms of biological role, essential for the import of peroxisomal matrix proteins. The protein is Peroxisomal biogenesis factor 9 (PEX9) of Yarrowia lipolytica (strain CLIB 122 / E 150) (Yeast).